Reading from the N-terminus, the 282-residue chain is Phosphatidylserine decarboxylase proenzyme (282 aa).

Residues D88, H144, and S247 each act as charge relay system; for autoendoproteolytic cleavage activity in the active site. S247 functions as the Schiff-base intermediate with substrate; via pyruvic acid; for decarboxylase activity in the catalytic mechanism. At S247 the chain carries Pyruvic acid (Ser); by autocatalysis.

The protein belongs to the phosphatidylserine decarboxylase family. PSD-B subfamily. Prokaryotic type I sub-subfamily. In terms of assembly, heterodimer of a large membrane-associated beta subunit and a small pyruvoyl-containing alpha subunit. Requires pyruvate as cofactor. Post-translationally, is synthesized initially as an inactive proenzyme. Formation of the active enzyme involves a self-maturation process in which the active site pyruvoyl group is generated from an internal serine residue via an autocatalytic post-translational modification. Two non-identical subunits are generated from the proenzyme in this reaction, and the pyruvate is formed at the N-terminus of the alpha chain, which is derived from the carboxyl end of the proenzyme. The autoendoproteolytic cleavage occurs by a canonical serine protease mechanism, in which the side chain hydroxyl group of the serine supplies its oxygen atom to form the C-terminus of the beta chain, while the remainder of the serine residue undergoes an oxidative deamination to produce ammonia and the pyruvoyl prosthetic group on the alpha chain. During this reaction, the Ser that is part of the protease active site of the proenzyme becomes the pyruvoyl prosthetic group, which constitutes an essential element of the active site of the mature decarboxylase.

The protein resides in the cell membrane. It carries out the reaction a 1,2-diacyl-sn-glycero-3-phospho-L-serine + H(+) = a 1,2-diacyl-sn-glycero-3-phosphoethanolamine + CO2. It participates in phospholipid metabolism; phosphatidylethanolamine biosynthesis; phosphatidylethanolamine from CDP-diacylglycerol: step 2/2. In terms of biological role, catalyzes the formation of phosphatidylethanolamine (PtdEtn) from phosphatidylserine (PtdSer). The protein is Phosphatidylserine decarboxylase proenzyme of Xanthomonas campestris pv. campestris (strain B100).